We begin with the raw amino-acid sequence, 620 residues long: UvrABC system protein C (620 aa).

The 80-residue stretch at 13–92 (DKPGVYIMKN…IKKYSPRYNI (80 aa)) folds into the GIY-YIG domain. The 36-residue stretch at 204-239 (TSIIKKLKLEMEKAAEELEFEKAAKIRDRILAIELI) folds into the UVR domain.

The protein belongs to the UvrC family. As to quaternary structure, interacts with UvrB in an incision complex.

The protein resides in the cytoplasm. In terms of biological role, the UvrABC repair system catalyzes the recognition and processing of DNA lesions. UvrC both incises the 5' and 3' sides of the lesion. The N-terminal half is responsible for the 3' incision and the C-terminal half is responsible for the 5' incision. The polypeptide is UvrABC system protein C (Clostridium perfringens (strain ATCC 13124 / DSM 756 / JCM 1290 / NCIMB 6125 / NCTC 8237 / Type A)).